The chain runs to 217 residues: Coiled-coil domain-containing protein 124-A (217 aa).

Residues 1–128 (MPKKFQGENT…HLEMPLEENV (128 aa)) form a disordered region. 3 stretches are compositionally biased toward basic and acidic residues: residues 18 to 45 (RKAE…DDKH), 52 to 74 (RKED…QRLL), and 95 to 128 (TRAE…EENV). The stretch at 46 to 82 (VARKGQRKEDKEKKRLEQLERKKESQRLLDEEDSKMK) forms a coiled coil.

This sequence belongs to the CCDC124 family. Associates with translationally inactive ribosomes in the nonrotated state.

The protein localises to the cytoplasm. It is found in the cytoskeleton. Its subcellular location is the microtubule organizing center. The protein resides in the centrosome. It localises to the midbody. In terms of biological role, ribosome-binding protein involved in ribosome hibernation: associates with translationally inactive ribosomes and stabilizes the nonrotated conformation of the 80S ribosome, thereby promoting ribosome preservation and storage. The protein is Coiled-coil domain-containing protein 124-A (ccdc124-a) of Xenopus laevis (African clawed frog).